The sequence spans 513 residues: Glutamyl-tRNA(Gln) amidotransferase subunit A (513 aa).

Residues Lys-85 and Ser-160 each act as charge relay system in the active site. The Acyl-ester intermediate role is filled by Ser-184.

It belongs to the amidase family. GatA subfamily. Heterotrimer of A, B and C subunits.

The catalysed reaction is L-glutamyl-tRNA(Gln) + L-glutamine + ATP + H2O = L-glutaminyl-tRNA(Gln) + L-glutamate + ADP + phosphate + H(+). In terms of biological role, allows the formation of correctly charged Gln-tRNA(Gln) through the transamidation of misacylated Glu-tRNA(Gln) in organisms which lack glutaminyl-tRNA synthetase. The reaction takes place in the presence of glutamine and ATP through an activated gamma-phospho-Glu-tRNA(Gln). The protein is Glutamyl-tRNA(Gln) amidotransferase subunit A of Bifidobacterium longum subsp. infantis (strain ATCC 15697 / DSM 20088 / JCM 1222 / NCTC 11817 / S12).